A 396-amino-acid chain; its full sequence is Elongation factor Tu 2 (396 aa).

In terms of domain architecture, tr-type G spans 10–206; it reads KPHVNIGTIG…AVDSYIPTPQ (197 aa). The G1 stretch occupies residues 19–26; that stretch reads GHVDHGKT. Residue 19–26 participates in GTP binding; that stretch reads GHVDHGKT. Position 26 (threonine 26) interacts with Mg(2+). The interval 60 to 64 is G2; the sequence is GITIS. Residues 81–84 are G3; sequence DCPG. Residues 81–85 and 136–139 contribute to the GTP site; these read DCPGH and NKVD. The tract at residues 136–139 is G4; the sequence is NKVD. The G5 stretch occupies residues 174–176; the sequence is SAL.

This sequence belongs to the TRAFAC class translation factor GTPase superfamily. Classic translation factor GTPase family. EF-Tu/EF-1A subfamily. In terms of assembly, monomer.

The protein localises to the cytoplasm. The catalysed reaction is GTP + H2O = GDP + phosphate + H(+). Functionally, GTP hydrolase that promotes the GTP-dependent binding of aminoacyl-tRNA to the A-site of ribosomes during protein biosynthesis. The protein is Elongation factor Tu 2 of Myxococcus xanthus (strain DK1622).